We begin with the raw amino-acid sequence, 270 residues long: 3-phenylpropionate-dihydrodiol/cinnamic acid-dihydrodiol dehydrogenase (270 aa).

10-34 (FITGGGSGLGLALVERFIEKGAQVA) provides a ligand contact to NAD(+). Ser143 provides a ligand contact to substrate. Residue Tyr156 is the Proton acceptor of the active site.

The protein belongs to the short-chain dehydrogenases/reductases (SDR) family.

It carries out the reaction 3-(cis-5,6-dihydroxycyclohexa-1,3-dien-1-yl)propanoate + NAD(+) = 3-(2,3-dihydroxyphenyl)propanoate + NADH + H(+). The enzyme catalyses (2E)-3-(cis-5,6-dihydroxycyclohexa-1,3-dien-1-yl)prop-2-enoate + NAD(+) = (2E)-3-(2,3-dihydroxyphenyl)prop-2-enoate + NADH + H(+). Its pathway is aromatic compound metabolism; 3-phenylpropanoate degradation. Its function is as follows. Converts 3-phenylpropionate-dihydrodiol (PP-dihydrodiol) and cinnamic acid-dihydrodiol (CI-dihydrodiol) into 3-(2,3-dihydroxylphenyl)propanoic acid (DHPP) and 2,3-dihydroxicinnamic acid (DHCI), respectively. The protein is 3-phenylpropionate-dihydrodiol/cinnamic acid-dihydrodiol dehydrogenase (hcaB) of Escherichia coli.